The chain runs to 723 residues: Nucleolar protein 11 (723 aa).

The protein localises to the nucleus. It is found in the nucleolus. Its function is as follows. Ribosome biogenesis factor. May be required for both optimal rDNA transcription and pre-rRNA processing. This chain is Nucleolar protein 11 (NOL11), found in Gallus gallus (Chicken).